A 139-amino-acid chain; its full sequence is Protein archease (139 aa).

Ca(2+)-binding residues include aspartate 12, aspartate 138, and isoleucine 139.

It belongs to the archease family.

Its function is as follows. Activates the tRNA-splicing ligase complex by facilitating the enzymatic turnover of catalytic subunit RtcB. Acts by promoting the guanylylation of RtcB, a key intermediate step in tRNA ligation. Can also alter the NTP specificity of RtcB such that ATP, dGTP or ITP is used efficiently. This chain is Protein archease, found in Sulfolobus acidocaldarius (strain ATCC 33909 / DSM 639 / JCM 8929 / NBRC 15157 / NCIMB 11770).